A 586-amino-acid polypeptide reads, in one-letter code: CTP synthase (586 aa).

Positions 1-278 (MRKHPQTATK…DAFVVRRLNL (278 aa)) are amidoligase domain. S20 is a binding site for CTP. A UTP-binding site is contributed by S20. Residues 21–26 (SLGKGL) and D78 each bind ATP. Mg(2+) contacts are provided by D78 and E152. CTP is bound by residues 159 to 161 (DIE), 199 to 204 (KTKPTQ), and K235. UTP-binding positions include 199–204 (KTKPTQ) and K235. The Glutamine amidotransferase type-1 domain occupies 303 to 551 (RIALVGKYVE…VGAAIDYKAG (249 aa)). G366 contributes to the L-glutamine binding site. C393 acts as the Nucleophile; for glutamine hydrolysis in catalysis. L-glutamine contacts are provided by residues 394 to 397 (LGLQ), E416, and R477. Active-site residues include H524 and E526. The segment at 560–586 (EIPEHTPNGSSHRDGVGQPLPEPASRG) is disordered.

It belongs to the CTP synthase family. Homotetramer.

The catalysed reaction is UTP + L-glutamine + ATP + H2O = CTP + L-glutamate + ADP + phosphate + 2 H(+). It catalyses the reaction L-glutamine + H2O = L-glutamate + NH4(+). It carries out the reaction UTP + NH4(+) + ATP = CTP + ADP + phosphate + 2 H(+). Its pathway is pyrimidine metabolism; CTP biosynthesis via de novo pathway; CTP from UDP: step 2/2. Allosterically activated by GTP, when glutamine is the substrate; GTP has no effect on the reaction when ammonia is the substrate. The allosteric effector GTP functions by stabilizing the protein conformation that binds the tetrahedral intermediate(s) formed during glutamine hydrolysis. Inhibited by the product CTP, via allosteric rather than competitive inhibition. In terms of biological role, catalyzes the ATP-dependent amination of UTP to CTP with either L-glutamine or ammonia as the source of nitrogen. Regulates intracellular CTP levels through interactions with the four ribonucleotide triphosphates. In Mycobacterium tuberculosis (strain CDC 1551 / Oshkosh), this protein is CTP synthase.